Consider the following 152-residue polypeptide: uncharacterized protein (152 aa).

The Cytoplasmic segment spans residues 1 to 5; it reads MWFPQ. A helical transmembrane segment spans residues 6-26; the sequence is IIAGMAAGGAASAMTPGKVLF. Residues 27 to 38 are Extracellular-facing; it reads TNALGLGCSRSR. Residues 39–59 form a helical membrane-spanning segment; it reads GLFLEMFGTAVLCLTVLMTAV. Residues 60 to 65 are Cytoplasmic-facing; that stretch reads EKRETN. Residues 66-86 form a helical membrane-spanning segment; it reads FMAALPIGISLFMAHMALTGY. The Extracellular portion of the chain corresponds to 87-110; sequence TGTGVNPARSLGAAVAARYFPHYH. The NPA motif lies at 92-94; that stretch reads NPA. A helical membrane pass occupies residues 111 to 131; it reads WIYWISPLLGAFLAWSVWQLL. Topologically, residues 132–152 are cytoplasmic; sequence QILDYTTYVNAEKAAGQKKED.

It belongs to the MIP/aquaporin (TC 1.A.8) family.

The protein resides in the membrane. This is an uncharacterized protein from Saccharomyces cerevisiae (strain RM11-1a) (Baker's yeast).